The following is a 1782-amino-acid chain: Signal-induced proliferation-associated 1-like protein 1 (1782 aa).

3 disordered regions span residues 1 to 28, 47 to 125, and 140 to 171; these read MTSL…GAPK, GSSV…VSLN, and KNKT…RRIR. Basic and acidic residues predominate over residues 84-94; that stretch reads PPRKENVKESS. The span at 95 to 125 shows a compositional bias: low complexity; that stretch reads RSSQEIETSSCLESLSSKGSPVSQGSSVSLN. Residues Ser-162, Ser-187, Ser-193, Ser-208, Ser-255, and Ser-288 each carry the phosphoserine modification. The disordered stretch occupies residues 277–297; sequence EREKPLKRRSKSETGDSSIFR. Residues 599 to 816 enclose the Rap-GAP domain; sequence LMKLDEQGLN…RTRQEYLKDL (218 aa). Residues 953-1031 form the PDZ domain; it reads EMTLRRNGLG…VVIIPPHDDC (79 aa). Disordered stretches follow at residues 1069–1128 and 1144–1213; these read QRNA…RLSP and SQCR…SLAD. Residues Ser-1078, Ser-1087, Ser-1116, Ser-1127, Ser-1149, Ser-1170, and Ser-1181 each carry the phosphoserine modification. Residues 1080–1093 are compositionally biased toward polar residues; it reads QVPSQLQSPMTSRL. Over residues 1149 to 1159 the composition is skewed to low complexity; the sequence is SPSNLSSSSET. The span at 1186-1205 shows a compositional bias: polar residues; sequence DRQNTQSDISGSGKSTPSWQ. Phosphoserine occurs at positions 1234 and 1249. The interval 1247–1285 is disordered; it reads HLSPNKQGHSDSHYSSHSSSNTLSSNASSAHSDEKWYDG. Low complexity predominate over residues 1261–1276; it reads SSHSSSNTLSSNASSA. Ser-1305 carries the post-translational modification Phosphoserine; by PLK2. Residues 1307 to 1342 are disordered; sequence IDTASYGPSHGSTASLGASTSSPRSGPGKEKVAPLW. Phosphothreonine; by PLK2 is present on Thr-1309. The segment covering 1315-1328 has biased composition (low complexity); it reads SHGSTASLGASTSS. A Phosphoserine; by CDK5 modification is found at Ser-1328. Ser-1345 bears the Phosphoserine mark. Over residues 1358–1368 the composition is skewed to basic and acidic residues; sequence TEGHGMDRKAE. Positions 1358–1454 are disordered; sequence TEGHGMDRKA…SSSGPRTFYP (97 aa). Phosphoserine occurs at positions 1369, 1370, 1391, 1410, and 1412. A compositionally biased stretch (polar residues) spans 1378 to 1410; that stretch reads KSQGGSSPLSRENSTFSINDAASHTSTMSSRHS. Over residues 1432 to 1447 the composition is skewed to low complexity; the sequence is SSQLAPSFSSSSSSSS. Phosphoserine is present on residues Ser-1507 and Ser-1528. Thr-1530 carries the post-translational modification Phosphothreonine. Phosphoserine is present on residues Ser-1533, Ser-1544, Ser-1547, Ser-1564, and Ser-1567. Residue Arg-1580 is modified to Asymmetric dimethylarginine. 9 positions are modified to phosphoserine: Ser-1582, Ser-1624, Ser-1626, Ser-1629, Ser-1687, Ser-1690, Ser-1707, Ser-1708, and Ser-1712. The tract at residues 1625 to 1647 is disordered; sequence ASDSSLTDIQETRRQPIPDPGLM. Residues 1713–1773 are a coiled coil; the sequence is PTLASKVDQL…ASDKLKKFTE (61 aa).

In terms of assembly, interacts with DLG4, PDLIM5, PDLIM7 and LZTS3. Interacts with the actin cytoskeleton. Interacts (via PDZ domain) with EPHA4 (via PDZ motif); controls neuronal morphology through regulation of the RAP1 (RAP1A or RAP1B) and RAP2 (RAP2A, RAP2B or RAP2C) GTPases. In terms of processing, ubiquitinated and degraded by the SCF(BTRC) following phosphorylation by PLK2. Phosphorylated at Ser-1328 by CDK5, creating a docking site for the POLO box domains of PLK2. Subsequently, PLK2 binds and phosphorylates SIPA1L1, leading to ubiquitination and degradation by the proteasome.

It localises to the cytoplasm. The protein resides in the cytoskeleton. It is found in the postsynaptic density. Its subcellular location is the synapse. The protein localises to the synaptosome. In terms of biological role, stimulates the GTPase activity of RAP2A. Promotes reorganization of the actin cytoskeleton and recruits DLG4 to F-actin. Contributes to the regulation of dendritic spine morphogenesis. The protein is Signal-induced proliferation-associated 1-like protein 1 (Sipa1l1) of Mus musculus (Mouse).